A 67-amino-acid chain; its full sequence is Probable Sec-independent protein translocase protein TatE (67 aa).

The chain crosses the membrane as a helical span at residues 4 to 21 (ISITKLLVVAALVVLLFG).

This sequence belongs to the TatA/E family. TatE subfamily.

The protein localises to the cell inner membrane. Part of the twin-arginine translocation (Tat) system that transports large folded proteins containing a characteristic twin-arginine motif in their signal peptide across membranes. TatE shares overlapping functions with TatA. The chain is Probable Sec-independent protein translocase protein TatE from Shigella flexneri.